An 83-amino-acid chain; its full sequence is MTEQSSRTVQGRVVSNKMDKTITVAVERKVKSPIYGKFIKRTTKLHAHDETNQCNTGDVVTVRECRPMSKSKNWMLVDIVTKA.

It belongs to the universal ribosomal protein uS17 family. As to quaternary structure, part of the 30S ribosomal subunit.

In terms of biological role, one of the primary rRNA binding proteins, it binds specifically to the 5'-end of 16S ribosomal RNA. The polypeptide is Small ribosomal subunit protein uS17 (Pseudoalteromonas atlantica (strain T6c / ATCC BAA-1087)).